The chain runs to 258 residues: Hydroxyethylthiazole kinase (258 aa).

Substrate is bound at residue M37. Residues R112 and T158 each coordinate ATP. A185 provides a ligand contact to substrate.

It belongs to the Thz kinase family. The cofactor is Mg(2+).

It carries out the reaction 5-(2-hydroxyethyl)-4-methylthiazole + ATP = 4-methyl-5-(2-phosphooxyethyl)-thiazole + ADP + H(+). The protein operates within cofactor biosynthesis; thiamine diphosphate biosynthesis; 4-methyl-5-(2-phosphoethyl)-thiazole from 5-(2-hydroxyethyl)-4-methylthiazole: step 1/1. Catalyzes the phosphorylation of the hydroxyl group of 4-methyl-5-beta-hydroxyethylthiazole (THZ). This chain is Hydroxyethylthiazole kinase, found in Rhizobium etli (strain CIAT 652).